A 256-amino-acid polypeptide reads, in one-letter code: Imidazole glycerol phosphate synthase subunit HisF (256 aa).

Catalysis depends on residues aspartate 11 and aspartate 130.

Belongs to the HisA/HisF family. In terms of assembly, heterodimer of HisH and HisF.

The protein localises to the cytoplasm. It catalyses the reaction 5-[(5-phospho-1-deoxy-D-ribulos-1-ylimino)methylamino]-1-(5-phospho-beta-D-ribosyl)imidazole-4-carboxamide + L-glutamine = D-erythro-1-(imidazol-4-yl)glycerol 3-phosphate + 5-amino-1-(5-phospho-beta-D-ribosyl)imidazole-4-carboxamide + L-glutamate + H(+). It functions in the pathway amino-acid biosynthesis; L-histidine biosynthesis; L-histidine from 5-phospho-alpha-D-ribose 1-diphosphate: step 5/9. Its function is as follows. IGPS catalyzes the conversion of PRFAR and glutamine to IGP, AICAR and glutamate. The HisF subunit catalyzes the cyclization activity that produces IGP and AICAR from PRFAR using the ammonia provided by the HisH subunit. The protein is Imidazole glycerol phosphate synthase subunit HisF of Prochlorococcus marinus (strain AS9601).